Consider the following 359-residue polypeptide: Probable dual-specificity RNA methyltransferase RlmN (359 aa).

The Proton acceptor role is filled by Glu-100. Positions 106-340 (TDKRLTVCVS…VSVRASRGRD (235 aa)) constitute a Radical SAM core domain. Cys-113 and Cys-345 are oxidised to a cystine. [4Fe-4S] cluster is bound by residues Cys-120, Cys-124, and Cys-127. S-adenosyl-L-methionine contacts are provided by residues 167–168 (GE), Ser-197, 226–228 (SLH), and Asn-302. The active-site S-methylcysteine intermediate is the Cys-345.

The protein belongs to the radical SAM superfamily. RlmN family. It depends on [4Fe-4S] cluster as a cofactor.

The protein resides in the cytoplasm. It catalyses the reaction adenosine(2503) in 23S rRNA + 2 reduced [2Fe-2S]-[ferredoxin] + 2 S-adenosyl-L-methionine = 2-methyladenosine(2503) in 23S rRNA + 5'-deoxyadenosine + L-methionine + 2 oxidized [2Fe-2S]-[ferredoxin] + S-adenosyl-L-homocysteine. The catalysed reaction is adenosine(37) in tRNA + 2 reduced [2Fe-2S]-[ferredoxin] + 2 S-adenosyl-L-methionine = 2-methyladenosine(37) in tRNA + 5'-deoxyadenosine + L-methionine + 2 oxidized [2Fe-2S]-[ferredoxin] + S-adenosyl-L-homocysteine. In terms of biological role, specifically methylates position 2 of adenine 2503 in 23S rRNA and position 2 of adenine 37 in tRNAs. In Prochlorococcus marinus (strain NATL1A), this protein is Probable dual-specificity RNA methyltransferase RlmN.